The primary structure comprises 240 residues: REF/SRPP-like protein At1g67360 (240 aa).

Residues 208–240 are disordered; the sequence is KEDARRKKGGDTAGKKGETTDAADGDKSSSDSE.

It belongs to the REF/SRPP family.

This chain is REF/SRPP-like protein At1g67360, found in Arabidopsis thaliana (Mouse-ear cress).